The primary structure comprises 1294 residues: MEILRGSPALSAFRINKLLVRCKEHLLPVSDIYAEYVHFADVSTPLNNDEQAKLTRLLKYGPSLAEHEPQGHLLLVTPRPGTISPWSSKATDIAHNCGLSKVLRLERGLAFYIHAPTLNDEQWQQLGALLHDRMMESVFSDLKQAAALFSHHQPAPFKRIEILLQGRQALEEANVRLGLALAEDEIDYLLEAFNNLGRNPTDIELYMFAQANSEHCRHKIFNADWVIDGVTQPKSLFKMIKNTFEHTPDHVLSAYKDNAAVMEGSAVGRFYTDANGQYDYHQEDAHILMKVETHNHPTAISPWPGAATGSGGEIRDEGATGRGSKPKAGLVGFSVSNLRIPGFIQPWEEEFGKPDRIVSALDIMTEGPLGGAAFNNEFGRPALTGYFRTYEERVDSHNGEELRGYHKPIMLAGGIGNIRGDHVKKGEIIVGAKLIVLGGPSMNIGLGGGAASSMASGQSDADLDFASVQRDNPEMERRCQEVIDRCWQLGEANPILFIHDVGAGGLSNAMPELVSDGGRGGRFELRDILNDEPGMSPLEVWCNESQERYVLAVAPEQLAQFDEICRRERAPYAVIGEATEELHLTMNDRHFNNQPIDLPLDVLLGKTPKMLRDVERKQVEGTPLQRDDIYLAEAVERVLHLPVVAEKTFLITIGDRSVTGMVARDQMVGPWQVPVADCAVTTASLDSYYGEAMSIGERAPVALRNFAASARLAVGEALTNIAATHIGPLTRVKLSANWMAAAGHPGEDAGLYDAVKAVGEELCPALGLTIPVGKDSMSMKTRWQEEGEDRAVTSPMSLVISAFARVEDVRNTVTPQLRTGQDNALLLIDLGAGNKALGATALAQVYRQLGRKTADVHSPEQLAGFFNAIQELVAAKALLAYHDRSDGGLIVTLAEMAFAGHCGVTVDIASQGEDTLATLFNEELGAVIQIPAARRAEVDAILALHGLADCVHYLGQAEEGTRFTINQGAEAVYQESRSTLRRWWAETSWQMQRLRDNPQCADQEHIARQDDNDPGLNVSLTFDPKEDIAAPYIAKNVRPKVAVLREQGVNSHVEMAAAFHRAGFDAIDIHMSDLLANRRNLQDFQALVACGGFSYGDVLGAGEGWAKSILFNARVRDEFAEFFLRPQTLALGVCNGCQMMSNLRELIPGADLWPRFVRNKSDRFEARFSLVEVDKSPSLFMNDMAGSRMPIAVSHGEGQVEVRDDAHLAAIEEHGLVALRYINHYGQVTENYPANPNGSSNGITAVTSTSGRATVMMPHPERVFRTVSNSWHPEEWGEDGPWMRMFRNARRQLG.

The segment at 303-325 is disordered; sequence WPGAATGSGGEIRDEGATGRGSK. Residues 305–316, 384–386, and alanine 676 contribute to the ATP site; these read GAATGSGGEIRD and TGY. The Mg(2+) site is built by aspartate 677, glutamate 716, asparagine 720, and aspartate 883. Serine 885 contributes to the ATP binding site. The region spanning 1041-1294 is the Glutamine amidotransferase type-1 domain; the sequence is VAVLREQGVN…MFRNARRQLG (254 aa). The active-site Nucleophile is cysteine 1134. Residues histidine 1259 and glutamate 1261 contribute to the active site.

The protein in the N-terminal section; belongs to the FGAMS family. As to quaternary structure, monomer.

The protein resides in the cytoplasm. The catalysed reaction is N(2)-formyl-N(1)-(5-phospho-beta-D-ribosyl)glycinamide + L-glutamine + ATP + H2O = 2-formamido-N(1)-(5-O-phospho-beta-D-ribosyl)acetamidine + L-glutamate + ADP + phosphate + H(+). The protein operates within purine metabolism; IMP biosynthesis via de novo pathway; 5-amino-1-(5-phospho-D-ribosyl)imidazole from N(2)-formyl-N(1)-(5-phospho-D-ribosyl)glycinamide: step 1/2. Functionally, phosphoribosylformylglycinamidine synthase involved in the purines biosynthetic pathway. Catalyzes the ATP-dependent conversion of formylglycinamide ribonucleotide (FGAR) and glutamine to yield formylglycinamidine ribonucleotide (FGAM) and glutamate. In Pectobacterium atrosepticum (strain SCRI 1043 / ATCC BAA-672) (Erwinia carotovora subsp. atroseptica), this protein is Phosphoribosylformylglycinamidine synthase.